The chain runs to 201 residues: Small ribosomal subunit protein uS4B (201 aa).

The 64-residue stretch at 93 to 156 folds into the S4 RNA-binding domain; the sequence is QRLDTVVYRL…RSLAVVRESL (64 aa).

Belongs to the universal ribosomal protein uS4 family. In terms of assembly, part of the 30S ribosomal subunit. Contacts protein S5. The interaction surface between S4 and S5 is involved in control of translational fidelity.

Its function is as follows. One of the primary rRNA binding proteins, it binds directly to 16S rRNA where it nucleates assembly of the body of the 30S subunit. Functionally, with S5 and S12 plays an important role in translational accuracy. The polypeptide is Small ribosomal subunit protein uS4B (Symbiobacterium thermophilum (strain DSM 24528 / JCM 14929 / IAM 14863 / T)).